We begin with the raw amino-acid sequence, 376 residues long: Succinyl-diaminopimelate desuccinylase (376 aa).

Histidine 67 is a binding site for Zn(2+). Residue aspartate 69 is part of the active site. Aspartate 100 serves as a coordination point for Zn(2+). Residue glutamate 134 is the Proton acceptor of the active site. Zn(2+) contacts are provided by glutamate 135, glutamate 163, and histidine 349.

This sequence belongs to the peptidase M20A family. DapE subfamily. In terms of assembly, homodimer. It depends on Zn(2+) as a cofactor. Requires Co(2+) as cofactor.

The catalysed reaction is N-succinyl-(2S,6S)-2,6-diaminopimelate + H2O = (2S,6S)-2,6-diaminopimelate + succinate. It functions in the pathway amino-acid biosynthesis; L-lysine biosynthesis via DAP pathway; LL-2,6-diaminopimelate from (S)-tetrahydrodipicolinate (succinylase route): step 3/3. Functionally, catalyzes the hydrolysis of N-succinyl-L,L-diaminopimelic acid (SDAP), forming succinate and LL-2,6-diaminopimelate (DAP), an intermediate involved in the bacterial biosynthesis of lysine and meso-diaminopimelic acid, an essential component of bacterial cell walls. This chain is Succinyl-diaminopimelate desuccinylase, found in Pseudoalteromonas translucida (strain TAC 125).